Here is a 110-residue protein sequence, read N- to C-terminus: Probable protein L3 (110 aa).

This chain is Probable protein L3, found in Human papillomavirus type 5b.